Here is a 120-residue protein sequence, read N- to C-terminus: Large ribosomal subunit protein bL20 (120 aa).

Belongs to the bacterial ribosomal protein bL20 family.

Functionally, binds directly to 23S ribosomal RNA and is necessary for the in vitro assembly process of the 50S ribosomal subunit. It is not involved in the protein synthesizing functions of that subunit. In Chlamydia abortus (strain DSM 27085 / S26/3) (Chlamydophila abortus), this protein is Large ribosomal subunit protein bL20.